Consider the following 449-residue polypeptide: Probable glycine dehydrogenase (decarboxylating) subunit 1 (449 aa).

Belongs to the GcvP family. N-terminal subunit subfamily. The glycine cleavage system is composed of four proteins: P, T, L and H. In this organism, the P 'protein' is a heterodimer of two subunits.

It catalyses the reaction N(6)-[(R)-lipoyl]-L-lysyl-[glycine-cleavage complex H protein] + glycine + H(+) = N(6)-[(R)-S(8)-aminomethyldihydrolipoyl]-L-lysyl-[glycine-cleavage complex H protein] + CO2. In terms of biological role, the glycine cleavage system catalyzes the degradation of glycine. The P protein binds the alpha-amino group of glycine through its pyridoxal phosphate cofactor; CO(2) is released and the remaining methylamine moiety is then transferred to the lipoamide cofactor of the H protein. The chain is Probable glycine dehydrogenase (decarboxylating) subunit 1 from Pyrococcus horikoshii (strain ATCC 700860 / DSM 12428 / JCM 9974 / NBRC 100139 / OT-3).